Here is an 817-residue protein sequence, read N- to C-terminus: Protein Jade-3 (817 aa).

A disordered region spans residues 1–38 (MKRLRNLSSSDSSDNESPSTSFSSCFQHKGKGKCTADD). The span at 8-24 (SSSDSSDNESPSTSFSS) shows a compositional bias: low complexity. The PHD-type 1 zinc-finger motif lies at 202–252 (DVICDVCRSPDSEEGNDMVFCDRCNICVHQACYGILKVPEGSWLCRTCVLG). The C2HC pre-PHD-type zinc finger occupies 254 to 288 (HPQCILCPKTGGAMKATRTGTKWAHVSCALWIPEV). Residues 312 to 368 (LVCSLCKLKTGACIQCSVKSCITAFHVTCAFEHSLEMKTILDEGDEVKFKSYCLKHS) form a PHD-type 2 zinc finger. Disordered stretches follow at residues 375–396 (ISEQEEPHKTHSDNRPTESERT), 665–689 (NGVLSSGDRTQRDSSSQTSPGQNSE), and 719–817 (LVRT…SVQR). Positions 379-396 (EEPHKTHSDNRPTESERT) are enriched in basic and acidic residues. The segment covering 667-689 (VLSSGDRTQRDSSSQTSPGQNSE) has biased composition (polar residues). A compositionally biased stretch (basic and acidic residues) spans 722-743 (TTEDLRSSEKPQRRQSVKERLW). Polar residues predominate over residues 747–758 (PADTQTSGTPYQ). Over residues 777–799 (DENKDHMLLRRNSRESPNRDSCR) the composition is skewed to basic and acidic residues. Basic residues predominate over residues 801 to 810 (SRIRGKRKMT).

The protein belongs to the JADE family. In terms of assembly, component of the HBO1 complex.

Functionally, scaffold subunit of some HBO1 complexes, which have a histone H4 acetyltransferase activity. The sequence is that of Protein Jade-3 (jade3) from Xenopus tropicalis (Western clawed frog).